The following is a 338-amino-acid chain: Phosphate acyltransferase (338 aa).

This sequence belongs to the PlsX family. In terms of assembly, homodimer. Probably interacts with PlsY.

The protein localises to the cytoplasm. It carries out the reaction a fatty acyl-[ACP] + phosphate = an acyl phosphate + holo-[ACP]. Its pathway is lipid metabolism; phospholipid metabolism. In terms of biological role, catalyzes the reversible formation of acyl-phosphate (acyl-PO(4)) from acyl-[acyl-carrier-protein] (acyl-ACP). This enzyme utilizes acyl-ACP as fatty acyl donor, but not acyl-CoA. The sequence is that of Phosphate acyltransferase from Alcanivorax borkumensis (strain ATCC 700651 / DSM 11573 / NCIMB 13689 / SK2).